Here is a 160-residue protein sequence, read N- to C-terminus: SsrA-binding protein (160 aa).

It belongs to the SmpB family.

The protein localises to the cytoplasm. Functionally, required for rescue of stalled ribosomes mediated by trans-translation. Binds to transfer-messenger RNA (tmRNA), required for stable association of tmRNA with ribosomes. tmRNA and SmpB together mimic tRNA shape, replacing the anticodon stem-loop with SmpB. tmRNA is encoded by the ssrA gene; the 2 termini fold to resemble tRNA(Ala) and it encodes a 'tag peptide', a short internal open reading frame. During trans-translation Ala-aminoacylated tmRNA acts like a tRNA, entering the A-site of stalled ribosomes, displacing the stalled mRNA. The ribosome then switches to translate the ORF on the tmRNA; the nascent peptide is terminated with the 'tag peptide' encoded by the tmRNA and targeted for degradation. The ribosome is freed to recommence translation, which seems to be the essential function of trans-translation. This Actinobacillus succinogenes (strain ATCC 55618 / DSM 22257 / CCUG 43843 / 130Z) protein is SsrA-binding protein.